We begin with the raw amino-acid sequence, 323 residues long: Putative divalent cation/proton antiporter TMEM165 (323 aa).

The N-terminal stretch at 1 to 33 (MAAAARGSGRAPTRRLLVLLLLQLLWAPAGVRA) is a signal peptide. Residues 34-89 (GPEEDLSHRNQEPPAPAQQLQPQPAAVQGLEPARAEKGLTPVAPVHTNKEDAAAQT) lie on the Lumenal side of the membrane. Basic and acidic residues predominate over residues 35–44 (PEEDLSHRNQ). Residues 35 to 60 (PEEDLSHRNQEPPAPAQQLQPQPAAV) form a disordered region. The span at 50-59 (AQQLQPQPAA) shows a compositional bias: low complexity. The chain crosses the membrane as a helical span at residues 90 to 110 (NLGFIHAFVAAISVIIVSELG). Topologically, residues 111–126 (DKTFFIAAIMAMRYNR) are cytoplasmic. A helical transmembrane segment spans residues 127-147 (LTVLAGAMLALALMTCLSVLF). The Lumenal portion of the chain corresponds to 148–151 (GYAT). A helical membrane pass occupies residues 152-172 (TVIPRVYTYYVSTALFAIFGI). The Cytoplasmic segment spans residues 173–227 (RMLREGLKMSPDEGQEELEEVQAELKKKDEEFQRTKLLNGPDVETGTSTAIPQKK). Positions 184–211 (DEGQEELEEVQAELKKKDEEFQRTKLLN) form a coiled coil. The chain crosses the membrane as a helical span at residues 228–248 (WLHFISPIFVQALTLTFLAEW). The Lumenal portion of the chain corresponds to 249 to 266 (GDRSQLTTIVLAAREDPY). Residues 267–287 (GVAVGGTVGHCLCTGLAVIGG) traverse the membrane as a helical segment. Topologically, residues 288 to 298 (RMIAQKISVRT) are cytoplasmic. A helical membrane pass occupies residues 299 to 319 (VTIIGGIVFLAFAFSALFISP). Residues 320-323 (ESGF) lie on the Lumenal side of the membrane.

Belongs to the GDT1 family. In terms of tissue distribution, expressed in mammary epithelial cells (at protein level).

Its subcellular location is the golgi apparatus membrane. The enzyme catalyses Ca(2+)(in) + n H(+)(out) = Ca(2+)(out) + n H(+)(in). It carries out the reaction Mn(2+)(in) + n H(+)(out) = Mn(2+)(out) + n H(+)(in). Its function is as follows. Putative divalent cation:proton antiporter that exchanges calcium or manganese ions for protons across the Golgi membrane. Mediates the reversible transport of calcium or manganese to the Golgi lumen driven by the proton gradient and possibly the membrane potential generated by V-ATPase. Provides calcium or manganese cofactors to resident Golgi enzymes and contributes to the maintenance of an acidic luminal Golgi pH required for proper functioning of the secretory pathway. Promotes Ca(2+) storage within the Golgi lumen of the mammary epithelial cells to be then secreted into milk. The transport mechanism and stoichiometry remains to be elucidated. This chain is Putative divalent cation/proton antiporter TMEM165, found in Mus musculus (Mouse).